The primary structure comprises 117 residues: Large ribosomal subunit protein uL18 (117 aa).

This sequence belongs to the universal ribosomal protein uL18 family. Part of the 50S ribosomal subunit; part of the 5S rRNA/L5/L18/L25 subcomplex. Contacts the 5S and 23S rRNAs.

Its function is as follows. This is one of the proteins that bind and probably mediate the attachment of the 5S RNA into the large ribosomal subunit, where it forms part of the central protuberance. The protein is Large ribosomal subunit protein uL18 of Mycoplasma mobile (strain ATCC 43663 / 163K / NCTC 11711) (Mesomycoplasma mobile).